A 247-amino-acid chain; its full sequence is tRNA (guanine-N(1)-)-methyltransferase (247 aa).

S-adenosyl-L-methionine is bound by residues glycine 115 and 135 to 140 (IGDYVL).

The protein belongs to the RNA methyltransferase TrmD family. Homodimer.

It is found in the cytoplasm. It catalyses the reaction guanosine(37) in tRNA + S-adenosyl-L-methionine = N(1)-methylguanosine(37) in tRNA + S-adenosyl-L-homocysteine + H(+). Functionally, specifically methylates guanosine-37 in various tRNAs. The protein is tRNA (guanine-N(1)-)-methyltransferase of Alkaliphilus metalliredigens (strain QYMF).